The chain runs to 189 residues: RNA-binding protein (189 aa).

Residues 55–69 (CICPSSNHLVDDCVC) form a C4-type zinc finger. The tract at residues 114-189 (FLTSVNPGES…DANTRKSKRK (76 aa)) is disordered. The span at 158–167 (SSSERKRKEY) shows a compositional bias: basic and acidic residues. The span at 168-180 (SSNSETDLSSDSD) shows a compositional bias: low complexity.

This sequence belongs to the phytoreovirus RNA-binding protein family.

The protein localises to the host cytoplasm. In terms of biological role, constituent of viral factories. Binds to ssRNA and dsRNA. This is RNA-binding protein from Alopecurus aequalis (Barnyard grass).